We begin with the raw amino-acid sequence, 208 residues long: Mediator of RNA polymerase II transcription subunit 21 (208 aa).

Positions 52-122 (TKNSTAPPAP…PDSPRTFASR (71 aa)) are disordered. Residues 63–83 (GAPAGSQASPQQQSAQIPGQQ) show a composition bias toward low complexity. Residues 84 to 104 (QQGGGDAGQTPGAGGGTGGAG) are compositionally biased toward gly residues. Positions 146-195 (GIDSSEAEQERRIKELEKELRSAEEDREQRVRELRKLRKKLENVLGAVEV) form a coiled coil.

This sequence belongs to the Mediator complex subunit 21 family. In terms of assembly, component of the Mediator complex.

Its subcellular location is the nucleus. Its function is as follows. Component of the Mediator complex, a coactivator involved in the regulated transcription of nearly all RNA polymerase II-dependent genes. Mediator functions as a bridge to convey information from gene-specific regulatory proteins to the basal RNA polymerase II transcription machinery. Mediator is recruited to promoters by direct interactions with regulatory proteins and serves as a scaffold for the assembly of a functional preinitiation complex with RNA polymerase II and the general transcription factors. The protein is Mediator of RNA polymerase II transcription subunit 21 (srb7) of Aspergillus oryzae (strain ATCC 42149 / RIB 40) (Yellow koji mold).